We begin with the raw amino-acid sequence, 269 residues long: Regulating synaptic membrane exocytosis protein 4 (269 aa).

Positions 115 to 233 (PMGGVEIGLQ…DLTTLAVGWY (119 aa)) constitute a C2 domain. Phosphoserine occurs at positions 254 and 257.

In terms of assembly, binds PPFIA3. As to expression, brain specific.

Its subcellular location is the synapse. In terms of biological role, regulates synaptic membrane exocytosis. This Rattus norvegicus (Rat) protein is Regulating synaptic membrane exocytosis protein 4 (Rims4).